The primary structure comprises 1041 residues: Cullin-associated NEDD8-dissociated protein 1, C-terminal part (1041 aa).

2 disordered regions span residues 1–24 (MSSD…ELRE) and 64–103 (DMGE…EGGY). A compositionally biased stretch (basic and acidic residues) spans 9–24 (YSHDDEHDPQTDELRE). Over residues 65–103 (MGEDEEMSGTQDDGSEDDVTEEPDLEDDDFEDFEEEGGY) the composition is skewed to acidic residues. Residues 138–176 (SLYQQIAPAIVARFNKEREESVKLELVSTMDALVRKTAE) form an HEAT 1 repeat. The disordered stretch occupies residues 189–237 (SVGSGSKISRKRRRQDSDASMIDFEPSMGTSSAAGTPLAAPSSPQSGPQ). The segment covering 225 to 237 (PLAAPSSPQSGPQ) has biased composition (low complexity). HEAT repeat units follow at residues 242–279 (NALP…VRYG), 339–376 (PFLI…ALTP), 434–472 (LSFE…LCSR), 479–516 (NWVR…NPNT), 525–560 (MKNL…GNAQ), 598–637 (GSGL…NVGV), 670–708 (GASC…GNVK), 710–744 (YLPT…MVRR), 780–817 (LDPP…DSRD), and 822–867 (VLRP…HLGE).

It belongs to the CAND family. As to quaternary structure, interacts with candA-N. Interacts with unneddylated cullins culA and culD.

It is found in the nucleus. In terms of biological role, assembly factor of SCF (SKP1-CUL1-F-box protein) E3 ubiquitin ligase complexes that promotes the exchange of the substrate-recognition F-box subunit in SCF complexes, thereby playing a key role in the cellular repertoire of SCF complexes. Acts as a F-box protein exchange factor when interacting with candA-N. The sequence is that of Cullin-associated NEDD8-dissociated protein 1, C-terminal part (candA-C) from Emericella nidulans (strain FGSC A4 / ATCC 38163 / CBS 112.46 / NRRL 194 / M139) (Aspergillus nidulans).